The sequence spans 265 residues: Ribosomal RNA small subunit methyltransferase A (265 aa).

S-adenosyl-L-methionine-binding residues include H13, L15, G40, E62, D87, and N106.

This sequence belongs to the class I-like SAM-binding methyltransferase superfamily. rRNA adenine N(6)-methyltransferase family. RsmA subfamily.

It is found in the cytoplasm. The catalysed reaction is adenosine(1518)/adenosine(1519) in 16S rRNA + 4 S-adenosyl-L-methionine = N(6)-dimethyladenosine(1518)/N(6)-dimethyladenosine(1519) in 16S rRNA + 4 S-adenosyl-L-homocysteine + 4 H(+). Functionally, specifically dimethylates two adjacent adenosines (A1518 and A1519) in the loop of a conserved hairpin near the 3'-end of 16S rRNA in the 30S particle. May play a critical role in biogenesis of 30S subunits. The chain is Ribosomal RNA small subunit methyltransferase A from Persephonella marina (strain DSM 14350 / EX-H1).